Reading from the N-terminus, the 188-residue chain is Accessory gene regulator protein B (188 aa).

4 consecutive transmembrane segments (helical) span residues 49–69 (VALIFHTFLYTLFTHVSYFLV), 100–122 (VYFQVNLGIMYSVVAIGTVLIIY), 143–163 (LLSIIITMVLLIISFLAPEPF), and 164–184 (KQLILLGITLESITLLPIFFP).

This sequence belongs to the AgrB family.

The protein localises to the cell membrane. In terms of biological role, essential for the production of a quorum sensing system signal molecule, the autoinducing peptide (AIP). This quorum sensing system is responsible for the regulation of the expression of virulence factor genes. Involved in the proteolytic processing of AgrD, the precursor of AIP. This chain is Accessory gene regulator protein B, found in Staphylococcus haemolyticus (strain JCSC1435).